Consider the following 1411-residue polypeptide: Protein RhsB (1411 aa).

Repeat copies occupy residues 330–352 (GKQVRSFTYDDKYRGRMVAHRHT), 353–374 (GRPEIRYRYDSDGRVTEQLNPA), 375–417 (GLSY…EHAD), 418–438 (GSVTQSQFDAVGRLRAQTDAA), 439–460 (GRTTEYSPDVVTGLITRITTPD), 461–481 (GRASAFYYNHHNQLTSATGPD), 482–502 (GLELRREYDELGRLIQETAPD), 503–525 (GDITRYRYDNPHSDLPCATEDAT), 526–546 (GSRKTMTWSRYGQLLSFTDCS), 547–567 (GYVTRYDHDRFGQMTAVHREE), 568–588 (GLSQYRAYDSRGQLIAVKDTQ), 589–609 (GHETRYEYNIAGDLTAVIAPD), 610–629 (GSRNGTQYDAWGKAVRTTQG), 630–650 (GLTRSMEYDAAGRVIRLTSEN), 651–671 (GSHTTFRYDVLDRLIQETGFD), 672–691 (GRTQRYHHDLTGKLIRSEDE), 692–711 (GLVTHWHYDEADRLTHRTVK), 712–734 (GETAERWQYDERGWLTDISHISE), 735–758 (GHRVAVHYRYDEKGRLTGERQTVH), 808–828 (GDTPLVEYTRDRLHRETLRSF), 829–850 (GRYELTTAYTPAGQLQSQHLNS), 851–871 (LLSDRDYTWNDNGELIRISSP), 872–894 (RQTRSYSYSTTGRLTGVHTTAAN), 895–930 (LDIRIPYATDPAGNRLPDPELHPDSTLSMWPDNRIA), 931–959 (RDAHYLYRYDRHGRLTEKTDLIPEGVIRT), 960–984 (DDERTHRYHYDSQHRLVHYTRTQYE), 985–1019 (EPLVESRYLYDPLGRRVAKRVWRRERDLTGWMSLS), and 1162–1186 (GATAWCAEYDEWGNLLNEENPHQLQ). The interval 330–1186 (GKQVRSFTYD…LNEENPHQLQ (857 aa)) is 28 X approximate tandem repeats.

This sequence belongs to the RHS family.

In terms of biological role, rhs elements have a nonessential function. They may play an important role in the natural ecology of the cell. This Escherichia coli (strain K12) protein is Protein RhsB (rhsB).